The sequence spans 259 residues: Hydroxyacylglutathione hydrolase (259 aa).

Residues H56, H58, D60, H61, H112, D133, and H171 each contribute to the Zn(2+) site. Residues 224–238 show a composition bias toward basic and acidic residues; that stretch reads RTRETSVKEKADERS. The disordered stretch occupies residues 224–245; sequence RTRETSVKEKADERSSGQNTSQ.

This sequence belongs to the metallo-beta-lactamase superfamily. Glyoxalase II family. In terms of assembly, monomer. The cofactor is Zn(2+).

It carries out the reaction an S-(2-hydroxyacyl)glutathione + H2O = a 2-hydroxy carboxylate + glutathione + H(+). It participates in secondary metabolite metabolism; methylglyoxal degradation; (R)-lactate from methylglyoxal: step 2/2. Thiolesterase that catalyzes the hydrolysis of S-D-lactoyl-glutathione to form glutathione and D-lactic acid. This Pseudomonas savastanoi pv. phaseolicola (strain 1448A / Race 6) (Pseudomonas syringae pv. phaseolicola (strain 1448A / Race 6)) protein is Hydroxyacylglutathione hydrolase.